The sequence spans 478 residues: UBP1-associated protein 2A (478 aa).

The interval M1 to I99 is disordered. Residues G41–T75 show a composition bias toward acidic residues. RRM domains follow at residues R140 to K217 and K245 to K328. Disordered stretches follow at residues I321–G359 and G442–H478. Low complexity predominate over residues G442–P456. Over residues G457 to P470 the composition is skewed to gly residues.

Interacts with UBA1A, UBA2A, UBP1A, UBP1B, UBP1C and SRK2E. In terms of tissue distribution, expressed in young leaves, flowers and embryos.

It localises to the nucleus. Its function is as follows. Heterogeneous nuclear ribonucleoprotein (hnRNP)-like protein that acts as a component of a complex regulating the turnover of mRNAs in the nucleus. Binds with high affinity to RNA molecules that contain U-rich sequences in 3'-UTRs. May function in complex with UBP1 and contribute to the stabilization of mRNAs in the nucleus. However, unlike UBP1, UBA2A does not stimulate pre-mRNA splicing. In Arabidopsis thaliana (Mouse-ear cress), this protein is UBP1-associated protein 2A (UBA2A).